Consider the following 186-residue polypeptide: Ribosome-recycling factor (186 aa).

It belongs to the RRF family.

It localises to the cytoplasm. Functionally, responsible for the release of ribosomes from messenger RNA at the termination of protein biosynthesis. May increase the efficiency of translation by recycling ribosomes from one round of translation to another. The polypeptide is Ribosome-recycling factor (Amoebophilus asiaticus (strain 5a2)).